Consider the following 255-residue polypeptide: NAD kinase (255 aa).

The Proton acceptor role is filled by D44. Residues D44–G45, H49, N114–E115, D144, A152, S155–S160, and Q216 each bind NAD(+).

This sequence belongs to the NAD kinase family. Requires a divalent metal cation as cofactor.

The protein localises to the cytoplasm. The enzyme catalyses NAD(+) + ATP = ADP + NADP(+) + H(+). In terms of biological role, involved in the regulation of the intracellular balance of NAD and NADP, and is a key enzyme in the biosynthesis of NADP. Catalyzes specifically the phosphorylation on 2'-hydroxyl of the adenosine moiety of NAD to yield NADP. The protein is NAD kinase of Rickettsia peacockii (strain Rustic).